Consider the following 437-residue polypeptide: Indole diterpene prenyltransferase anaPT (437 aa).

A disordered region spans residues methionine 1–aspartate 28. Residues glycine 102–phenylalanine 103 and glutamate 111 each bind L-tryptophan. Arginine 124, lysine 208, tyrosine 210, tyrosine 282, glutamine 355, tyrosine 357, tyrosine 422, and tyrosine 426 together coordinate dimethylallyl diphosphate.

Belongs to the tryptophan dimethylallyltransferase family.

The enzyme catalyses (R)-benzodiazepinedione + dimethylallyl diphosphate = (2R,3S,11R)-aszonalenin + diphosphate. It carries out the reaction (S)-benzodiazepinedione + dimethylallyl diphosphate = (2R,3S,11S)-aszonalenin + diphosphate. Its pathway is alkaloid biosynthesis. Indole diterpene prenyltransferase; part of the gene cluster that mediates the biosynthesis of the prenylated pyrroloindoline diketopiperazine acetylaszonalenin. The first step in the pathway is the formation of (R)-benzodiazepinedione by condensation of tryptophan and anthranilic acid catalyzed by the non-ribosomal peptide synthetase anaPS. The prenyltransferase anaPT then converts (R)-benzodiazepinedione to aszonalenin in the presence of dimethylallyl diphosphate (DMAPP) via C3-prenylation. The last step in the biosynthesis of acetylaszonalenin via acetylation of aszonalenin at position N1 catalyzed by anaAT. In Neosartorya fischeri (strain ATCC 1020 / DSM 3700 / CBS 544.65 / FGSC A1164 / JCM 1740 / NRRL 181 / WB 181) (Aspergillus fischerianus), this protein is Indole diterpene prenyltransferase anaPT.